The following is a 252-amino-acid chain: 2-succinyl-6-hydroxy-2,4-cyclohexadiene-1-carboxylate synthase (252 aa).

Belongs to the AB hydrolase superfamily. MenH family. Monomer.

The enzyme catalyses 5-enolpyruvoyl-6-hydroxy-2-succinyl-cyclohex-3-ene-1-carboxylate = (1R,6R)-6-hydroxy-2-succinyl-cyclohexa-2,4-diene-1-carboxylate + pyruvate. It functions in the pathway quinol/quinone metabolism; 1,4-dihydroxy-2-naphthoate biosynthesis; 1,4-dihydroxy-2-naphthoate from chorismate: step 3/7. It participates in quinol/quinone metabolism; menaquinone biosynthesis. Catalyzes a proton abstraction reaction that results in 2,5-elimination of pyruvate from 2-succinyl-5-enolpyruvyl-6-hydroxy-3-cyclohexene-1-carboxylate (SEPHCHC) and the formation of 2-succinyl-6-hydroxy-2,4-cyclohexadiene-1-carboxylate (SHCHC). The chain is 2-succinyl-6-hydroxy-2,4-cyclohexadiene-1-carboxylate synthase from Escherichia coli (strain K12 / MC4100 / BW2952).